A 76-amino-acid polypeptide reads, in one-letter code: Frizzled-3 (76 aa).

Over Tyr1–Pro5 the chain is Cytoplasmic. The chain crosses the membrane as a helical span at residues Ile6 to Leu26. The Extracellular portion of the chain corresponds to Glu27–Cys54. Residue Asn33 is glycosylated (N-linked (GlcNAc...) asparagine). The helical transmembrane segment at Thr55 to Leu75 threads the bilayer. Residue Arg76 is a topological domain, cytoplasmic.

It belongs to the G-protein coupled receptor Fz/Smo family.

It localises to the membrane. The protein resides in the cell membrane. The protein localises to the cell surface. Its subcellular location is the apical cell membrane. Functionally, receptor for Wnt proteins. Most of frizzled receptors are coupled to the beta-catenin canonical signaling pathway, which leads to the activation of disheveled proteins, inhibition of GSK-3 kinase, nuclear accumulation of beta-catenin and activation of Wnt target genes. A second signaling pathway involving PKC and calcium fluxes has been seen for some family members, but it is not yet clear if it represents a distinct pathway or if it can be integrated in the canonical pathway, as PKC seems to be required for Wnt-mediated inactivation of GSK-3 kinase. Both pathways seem to involve interactions with G-proteins. May be involved in transduction and intercellular transmission of polarity information during tissue morphogenesis and/or in differentiated tissues. Plays a role in controlling early axon growth and guidance processes necessary for the formation of a subset of central and peripheral major fiber tracts. Involved in the migration of cranial neural crest cells. May also be implicated in the transmission of sensory information from the trunk and limbs to the brain. Controls commissural sensory axons guidance after midline crossing along the anterior-posterior axis in the developing spinal cord in a Wnt-dependent signaling pathway. Together with FZD6, is involved in the neural tube closure and plays a role in the regulation of the establishment of planar cell polarity (PCP). Promotes neurogenesis by maintaining sympathetic neuroblasts within the cell cycle in a beta-catenin-dependent manner. In Gallus gallus (Chicken), this protein is Frizzled-3 (FZD3).